A 1444-amino-acid chain; its full sequence is DNA polymerase III PolC-type (1444 aa).

The interval 196–218 is disordered; the sequence is EAVQVMQKRQAEGQNGNSSAAPL. Polar residues predominate over residues 207 to 216; that stretch reads EGQNGNSSAA. Residues 428-584 enclose the Exonuclease domain; the sequence is YCVFDVETTG…FDAEATAYLA (157 aa).

This sequence belongs to the DNA polymerase type-C family. PolC subfamily.

The protein resides in the cytoplasm. It catalyses the reaction DNA(n) + a 2'-deoxyribonucleoside 5'-triphosphate = DNA(n+1) + diphosphate. Functionally, required for replicative DNA synthesis. This DNA polymerase also exhibits 3' to 5' exonuclease activity. This Listeria welshimeri serovar 6b (strain ATCC 35897 / DSM 20650 / CCUG 15529 / CIP 8149 / NCTC 11857 / SLCC 5334 / V8) protein is DNA polymerase III PolC-type.